A 341-amino-acid polypeptide reads, in one-letter code: MGSSSNGGVPPGFRFHPTDEELLHYYLKKKISYQKFEMEVIREVDLNKLEPWDLQERCKIGSTPQNEWYFFSHKDRKYPTGSRTNRATHAGFWKATGRDKCIRNSYKKIGMRKTLVFYKGRAPHGQKTDWIMHEYRLEDADDPQANPSEDGWVVCRVFMKKNLFKVVNEGSSSINSLDQHNHDASNNNHALQARSFMHRDSPYQLVRNHGAMTFELNKPDLALHQYPPIFHKPPSLGFDYSSGLARDSESAASEGLQYQQACEPGLDVGTCETVASHNHQQGLGEWAMMDRLVTCHMGNEDSSRGITYEDGNNNSSSVVQPVPATNQLTLRSEMDFWGYSK.

In terms of domain architecture, NAC spans 9–160 (VPPGFRFHPT…GWVVCRVFMK (152 aa)). The DNA-binding element occupies 109 to 166 (IGMRKTLVFYKGRAPHGQKTDWIMHEYRLEDADDPQANPSEDGWVVCRVFMKKNLFKV).

As to expression, expressed throughout the root cap, in both columella (COL) and lateral root cap (LRC) cells, with higher levels in the COL-adjoining LRC than the upper LRC. Also present at low levels expression in the tips of cotyledons and the cotyledon vasculature, as weel as in vasculature of the first pair of true leaves and at the hydathodes.

It localises to the nucleus. Transcription activator. Together with BRN1 and SMB, regulates cellular maturation of root cap. Promotes the expression of genes involved in secondary cell walls (SCW) biosynthesis. The sequence is that of Protein BEARSKIN2 (BRN2) from Arabidopsis thaliana (Mouse-ear cress).